Here is a 158-residue protein sequence, read N- to C-terminus: Endoribonuclease YbeY (158 aa).

Positions 122, 126, and 132 each coordinate Zn(2+).

The protein belongs to the endoribonuclease YbeY family. Zn(2+) serves as cofactor.

The protein resides in the cytoplasm. In terms of biological role, single strand-specific metallo-endoribonuclease involved in late-stage 70S ribosome quality control and in maturation of the 3' terminus of the 16S rRNA. This Bacillus licheniformis (strain ATCC 14580 / DSM 13 / JCM 2505 / CCUG 7422 / NBRC 12200 / NCIMB 9375 / NCTC 10341 / NRRL NRS-1264 / Gibson 46) protein is Endoribonuclease YbeY.